A 214-amino-acid polypeptide reads, in one-letter code: MSNQKPVLYSYWRSSCSWRVRIALALKNVDYEYKTVDLLSEEAKSKLKEINPAAKVPTFVVDGQVITESLAIIEYLEETHPDVPLLPKDPIKRAHARAISLLVASGIQPLHNLKVLQLLNKKEAGFGGQFAKQFVVEGLTALEILLKQHSGKYAVGDDVTIADLSIPPLIYSANRFNLDLSPYPTVNRINETLADIPAFIAAHPDNQPDTGLNA.

Residues 4–84 (QKPVLYSYWR…YLEETHPDVP (81 aa)) form the GST N-terminal domain. Residues 14 to 19 (SSCSWR), V56, 68 to 69 (ES), Q108, and 112 to 114 (NLK) each bind glutathione. One can recognise a GST C-terminal domain in the interval 89–212 (DPIKRAHARA…HPDNQPDTGL (124 aa)).

The protein belongs to the GST superfamily. Zeta family. Glutathione serves as cofactor.

The protein localises to the cytoplasm. It carries out the reaction 4-maleylacetoacetate = 4-fumarylacetoacetate. The protein operates within amino-acid degradation; L-phenylalanine degradation; acetoacetate and fumarate from L-phenylalanine: step 5/6. The sequence is that of Probable maleylacetoacetate isomerase (gst-42) from Caenorhabditis elegans.